Reading from the N-terminus, the 124-residue chain is Large ribosomal subunit protein bL17 (124 aa).

It belongs to the bacterial ribosomal protein bL17 family. In terms of assembly, part of the 50S ribosomal subunit. Contacts protein L32.

In Borrelia turicatae (strain 91E135), this protein is Large ribosomal subunit protein bL17.